Here is a 360-residue protein sequence, read N- to C-terminus: uncharacterized protein (360 aa).

The segment at 193-245 (SRHTRPKGQPLSSPKKNSGSAARPSTAIGLCRRSQTPGALQSTGPSNTELEPE) is disordered. Composition is skewed to polar residues over residues 202–212 (PLSSPKKNSGS) and 225–241 (RSQTPGALQSTGPSNTE).

This is an uncharacterized protein from Homo sapiens (Human).